We begin with the raw amino-acid sequence, 207 residues long: Histone H1-like protein HC2 (207 aa).

Composition is skewed to basic residues over residues 1 to 50 (MLGV…KTVA) and 59 to 72 (PAAK…APVR). Residues 1-72 (MLGVQKKRST…KTAAKKAPVR (72 aa)) are disordered. 3 tandem repeats follow at residues 35-58 (VRKV…AARK), 71-94 (VRKV…AARK), and 113-136 (VRKV…AARK). Residues 35-136 (VRKVAAKKTV…VAKKAVAARK (102 aa)) form a 3 X 24 AA repeats of V-R-K-V-A-A-K-K-T-V-A-R-K-T-V-A-K-K-A-V-A-A-R-K region.

It belongs to the histone H1/H5 family. HCT subfamily.

Its function is as follows. Might have a role in establishing the nucleoid structure of elementary bodies. This Chlamydia muridarum (strain MoPn / Nigg) protein is Histone H1-like protein HC2 (hctB).